The sequence spans 197 residues: Nucleoside triphosphate pyrophosphatase (197 aa).

D75 acts as the Proton acceptor in catalysis.

The protein belongs to the Maf family. Requires a divalent metal cation as cofactor.

Its subcellular location is the cytoplasm. The enzyme catalyses a ribonucleoside 5'-triphosphate + H2O = a ribonucleoside 5'-phosphate + diphosphate + H(+). The catalysed reaction is a 2'-deoxyribonucleoside 5'-triphosphate + H2O = a 2'-deoxyribonucleoside 5'-phosphate + diphosphate + H(+). Nucleoside triphosphate pyrophosphatase. May have a dual role in cell division arrest and in preventing the incorporation of modified nucleotides into cellular nucleic acids. In Haemophilus ducreyi (strain 35000HP / ATCC 700724), this protein is Nucleoside triphosphate pyrophosphatase.